The following is a 361-amino-acid chain: Peptide chain release factor 1 (361 aa).

Position 235 is an N5-methylglutamine (Q235).

This sequence belongs to the prokaryotic/mitochondrial release factor family. Post-translationally, methylated by PrmC. Methylation increases the termination efficiency of RF1.

It is found in the cytoplasm. Its function is as follows. Peptide chain release factor 1 directs the termination of translation in response to the peptide chain termination codons UAG and UAA. This Buchnera aphidicola subsp. Schizaphis graminum (strain Sg) protein is Peptide chain release factor 1.